A 98-amino-acid polypeptide reads, in one-letter code: NADH-ubiquinone oxidoreductase chain 4L (98 aa).

3 consecutive transmembrane segments (helical) span residues 1–21 (MTSI…GVLI), 28–48 (STLL…ALLI), and 59–79 (APII…ALLV).

Belongs to the complex I subunit 4L family. Core subunit of respiratory chain NADH dehydrogenase (Complex I) which is composed of 45 different subunits.

It is found in the mitochondrion inner membrane. The enzyme catalyses a ubiquinone + NADH + 5 H(+)(in) = a ubiquinol + NAD(+) + 4 H(+)(out). Its function is as follows. Core subunit of the mitochondrial membrane respiratory chain NADH dehydrogenase (Complex I) which catalyzes electron transfer from NADH through the respiratory chain, using ubiquinone as an electron acceptor. Part of the enzyme membrane arm which is embedded in the lipid bilayer and involved in proton translocation. This Trichosurus vulpecula (Brush-tailed possum) protein is NADH-ubiquinone oxidoreductase chain 4L (MT-ND4L).